The following is a 420-amino-acid chain: MLRKLTPLALALLPLVAGQTIGETPEVHPKLPTWKCSNRHGCVKQDTSVVIDAATHWIHEKGGETSCTGSSGPNPNLCPDKETCAANCVIEGISDYANYGVQTKGSSMTLHQYLRDGNTTKSVSPRVYLLAEDGENYEMLQLLNQEFTFDVDVSTLVCGMNGALYFSEMQRDGGRSELNPAGAARGTGYCDAQCFNIPWINGEANVEGAGACCNEMDIWEANARATGYTPHPCNITQLYECSGAECEANGVCDKPGCGFNPYALGAHDFYGYDLEVDTTKPMTVVTQFYTKDNTTTGALVEIRRLYVQNGHVIQNAVVSVDGESVDSITADYCADPSSAFNRLGGLQRMGEALGRGMVLAFSVWNDAGSFMSWLDGGNSGPCNATEGDPALIEKLHPDTHVTFSNIRWGDIGSTYRGKRR.

The N-terminal stretch at 1-18 is a signal peptide; sequence MLRKLTPLALALLPLVAG. The N-linked (GlcNAc...) asparagine glycan is linked to Asn118. Catalysis depends on Glu215, which acts as the Nucleophile. Glu220 functions as the Proton donor in the catalytic mechanism. Asn234, Asn293, and Asn383 each carry an N-linked (GlcNAc...) asparagine glycan.

It belongs to the glycosyl hydrolase 7 (cellulase C) family.

It localises to the secreted. The catalysed reaction is Endohydrolysis of (1-&gt;4)-beta-D-glucosidic linkages in cellulose, lichenin and cereal beta-D-glucans.. In terms of biological role, has endoglucanase activity on substrates containing beta-1,4 glycosidic bonds, like in carboxymethylcellulose (CMC), hydroxyethylcellulose (HEC) and beta-glucan. Involved in the degradation of complex natural cellulosic substrates. This is Probable endo-beta-1,4-glucanase celB (celB) from Aspergillus terreus (strain NIH 2624 / FGSC A1156).